The following is a 387-amino-acid chain: V-set and immunoglobulin domain-containing protein 1 (387 aa).

The first 21 residues, 1–21, serve as a signal peptide directing secretion; sequence MVFAFWKVFLILSCLAGQVSV. Residues 22–132 enclose the Ig-like V-type domain; it reads VQVTIPDGFV…DFLGQNQGIL (111 aa). Residues 22-232 lie on the Extracellular side of the membrane; the sequence is VQVTIPDGFV…EIDLTSSHPE (211 aa). N32 and N38 each carry an N-linked (GlcNAc...) asparagine glycan. C43 and C116 form a disulfide bridge. N133, N200, and N219 each carry an N-linked (GlcNAc...) asparagine glycan. The Ig-like C2-type domain maps to 140–227; that stretch reads PSKPLCSVQG…GNSSCEIDLT (88 aa). Cysteines 161 and 211 form a disulfide. A helical transmembrane segment spans residues 233–253; that stretch reads VGIIVGALIGSLVGAAIIISV. Topologically, residues 254–387 are cytoplasmic; the sequence is VCFARNKAKA…SEDEKGVVKA (134 aa). Positions 266–387 are disordered; that stretch reads KERNSKTIAE…SEDEKGVVKA (122 aa). A compositionally biased stretch (basic and acidic residues) spans 284-296; sequence PRGESEAMPREDA. Positions 299 to 308 are enriched in polar residues; that stretch reads LEVTLPSSIH. The segment covering 325 to 335 has biased composition (pro residues); that stretch reads TQEPAPEPAPG. Over residues 344-368 the composition is skewed to acidic residues; sequence LDIELELEPETQSELEPEPEPEPES.

Highly N-glycosylated. Appears not to contain significant amounts of O-linked carbohydrates or sialic acid in its sugar moieties. In terms of tissue distribution, detected only in stomach mucosa and testis, and to a much lesser level in pancreas (at protein level). Detected in gastric cancers (31%), esophageal carcinomas (50%) and ovarian cancers (23%).

It is found in the membrane. This is V-set and immunoglobulin domain-containing protein 1 (VSIG1) from Homo sapiens (Human).